The following is a 152-amino-acid chain: MASARRRRIKKKKQVISKKIEFRYRGYTLEELQQMPLREFAKLLPARQRRTLLRGLTPQQKKLAMKIKKARRLLNKGKEPRIIRTHCRDFVITPDMVGLTFGVYNGKEFVEVKVTPEMIGHYLGEFSLTRKPVQHGAPGMGATRSSMFVPIK.

It belongs to the universal ribosomal protein uS19 family.

In terms of biological role, protein S19 forms a complex with S13 that binds strongly to the 16S ribosomal RNA. The polypeptide is Small ribosomal subunit protein uS19 (rps19) (Methanocaldococcus jannaschii (strain ATCC 43067 / DSM 2661 / JAL-1 / JCM 10045 / NBRC 100440) (Methanococcus jannaschii)).